Consider the following 469-residue polypeptide: UDP-N-acetylmuramate--L-alanine ligase (469 aa).

ATP is bound at residue 123–129; it reads GSHGKTT.

It belongs to the MurCDEF family.

Its subcellular location is the cytoplasm. It carries out the reaction UDP-N-acetyl-alpha-D-muramate + L-alanine + ATP = UDP-N-acetyl-alpha-D-muramoyl-L-alanine + ADP + phosphate + H(+). It participates in cell wall biogenesis; peptidoglycan biosynthesis. In terms of biological role, cell wall formation. The polypeptide is UDP-N-acetylmuramate--L-alanine ligase (Synechococcus sp. (strain CC9605)).